A 394-amino-acid polypeptide reads, in one-letter code: MGCLGDSKTEDQRNEEKAQREANKKIEKQLQKDKQVYRATHRLLLLGAGESGKSTIVKQMRILHVNGFNGEGGEEDPQAARSNSDGEKATKVQDIKNNLKEAIETIVAAMSNLVPPVELANPENQFRVDYILSVMNVPNFDFPPEFYEHAKALWEDEGVRACYERSNEYQLIDCAQYFLDKIDVIKQADYVPSDQDLLRCRVLTSGIFETKFQVDKVNFHMFDVGGQRDERRKWIQCFNDVTAIIFVVASSSYNMVIREDNQTNRLQEALNLFKSIWNNRWLRTISVILFLNKQDLLAEKVLAGKSKIEDYFPEFARYTTPEDATPEPGEDPRVTRAKYFIRDEFLRISTASGDGRHYCYPHFTCAVDTENIRRVFNDCRDIIQRMHLRQYELL.

Residues Met-1 to Lys-25 form a disordered region. Gly-2 is lipidated: N-palmitoyl glycine. A lipid anchor (S-palmitoyl cysteine) is attached at Cys-3. Residues Ser-7 to Lys-25 are compositionally biased toward basic and acidic residues. The G-alpha domain maps to Ala-39 to Leu-394. Residues Arg-42–Thr-55 are G1 motif. Gly-47–Thr-55 contributes to the GTP binding site. Residue Ser-54 participates in Mg(2+) binding. Residues Phe-68–Thr-90 form a disordered region. The G2 motif stretch occupies residues Asp-196–Thr-204. Residues Leu-197 to Thr-204, Asp-223 to Gln-227, Asn-292 to Asp-295, and Ala-366 contribute to the GTP site. Residue Thr-204 coordinates Mg(2+). A G3 motif region spans residues Phe-219–Arg-228. A G4 motif region spans residues Ile-288–Asp-295. The G5 motif stretch occupies residues Thr-364–Thr-369.

Belongs to the G-alpha family. G(s) subfamily. In terms of assembly, heterotrimeric G proteins are composed of 3 units; alpha, beta and gamma. The alpha chain contains the guanine nucleotide binding site. Interacts with CRY1; the interaction may block GPCR-mediated regulation of cAMP concentrations. Interacts with ADCY6 and stimulates its adenylyl cyclase activity. Interacts with ADCY2 and ADCY5. Stimulates the ADCY5 adenylyl cyclase activity. Interaction with SASH1.

The protein resides in the cell membrane. Its function is as follows. Guanine nucleotide-binding proteins (G proteins) function as transducers in numerous signaling pathways controlled by G protein-coupled receptors (GPCRs). Signaling involves the activation of adenylyl cyclases, resulting in increased levels of the signaling molecule cAMP. GNAS functions downstream of several GPCRs, including beta-adrenergic receptors. Stimulates the Ras signaling pathway via RAPGEF2. This is Guanine nucleotide-binding protein G(s) subunit alpha (GNAS) from Cricetulus longicaudatus (Long-tailed dwarf hamster).